The sequence spans 285 residues: Bifunctional protein FolD (285 aa).

NADP(+) is bound by residues 165–167 (GRS) and S190.

This sequence belongs to the tetrahydrofolate dehydrogenase/cyclohydrolase family. Homodimer.

It carries out the reaction (6R)-5,10-methylene-5,6,7,8-tetrahydrofolate + NADP(+) = (6R)-5,10-methenyltetrahydrofolate + NADPH. It catalyses the reaction (6R)-5,10-methenyltetrahydrofolate + H2O = (6R)-10-formyltetrahydrofolate + H(+). The protein operates within one-carbon metabolism; tetrahydrofolate interconversion. Catalyzes the oxidation of 5,10-methylenetetrahydrofolate to 5,10-methenyltetrahydrofolate and then the hydrolysis of 5,10-methenyltetrahydrofolate to 10-formyltetrahydrofolate. This Burkholderia thailandensis (strain ATCC 700388 / DSM 13276 / CCUG 48851 / CIP 106301 / E264) protein is Bifunctional protein FolD.